We begin with the raw amino-acid sequence, 230 residues long: Probable methylthioribulose-1-phosphate dehydratase (230 aa).

Cys-87 contributes to the substrate binding site. 2 residues coordinate Zn(2+): His-105 and His-107. The active-site Proton donor/acceptor is the Glu-129. Zn(2+) is bound at residue His-185.

This sequence belongs to the aldolase class II family. MtnB subfamily. Requires Zn(2+) as cofactor.

It localises to the cytoplasm. It carries out the reaction 5-(methylsulfanyl)-D-ribulose 1-phosphate = 5-methylsulfanyl-2,3-dioxopentyl phosphate + H2O. It participates in amino-acid biosynthesis; L-methionine biosynthesis via salvage pathway; L-methionine from S-methyl-5-thio-alpha-D-ribose 1-phosphate: step 2/6. Its function is as follows. Catalyzes the dehydration of methylthioribulose-1-phosphate (MTRu-1-P) into 2,3-diketo-5-methylthiopentyl-1-phosphate (DK-MTP-1-P). The chain is Probable methylthioribulose-1-phosphate dehydratase from Drosophila pseudoobscura pseudoobscura (Fruit fly).